Consider the following 290-residue polypeptide: Bifunctional protein FolD (290 aa).

Residues 174–176 (GHS), Ile-199, and Ile-240 contribute to the NADP(+) site.

It belongs to the tetrahydrofolate dehydrogenase/cyclohydrolase family. In terms of assembly, homodimer.

The catalysed reaction is (6R)-5,10-methylene-5,6,7,8-tetrahydrofolate + NADP(+) = (6R)-5,10-methenyltetrahydrofolate + NADPH. The enzyme catalyses (6R)-5,10-methenyltetrahydrofolate + H2O = (6R)-10-formyltetrahydrofolate + H(+). It participates in one-carbon metabolism; tetrahydrofolate interconversion. Its function is as follows. Catalyzes the oxidation of 5,10-methylenetetrahydrofolate to 5,10-methenyltetrahydrofolate and then the hydrolysis of 5,10-methenyltetrahydrofolate to 10-formyltetrahydrofolate. The protein is Bifunctional protein FolD of Methanosarcina acetivorans (strain ATCC 35395 / DSM 2834 / JCM 12185 / C2A).